We begin with the raw amino-acid sequence, 345 residues long: MSQSTPLRTDVVVIGAGPVGLSAVFQCGMLKLRCHVVDALEAPGGQLTALYPEKPIYDVPGFPSIPAGELIDRLLEQVAPFTPEFHLSQQVIALEAVAGAEPAAWRLTTSRGVVLEAAAVIIAAGAGAFGPNRPPLDRLEAFEGTSVFYMVSKREAFRGRKVVIAGGGDSAVDWAISLSDVAERVHVVHRRPKFRCAPESAARLDQLAAEGKIDLVIPYQLKALGGTEGRLESVTVADLDGAERQLDADVLLPFFGLAANLGPIAEWGLGVERQTIPVTQATCRTARPGIYAVGDVASYPGKLKLILTGFAEASAAAHNAFHDCRPGEALHFEHSTTTGVPGIPA.

Residues Asp-38, Gln-46, Tyr-51, Val-91, Phe-129, Asp-295, and Thr-336 each contribute to the FAD site.

It belongs to the ferredoxin--NADP reductase type 2 family. Homodimer. The cofactor is FAD.

It catalyses the reaction 2 reduced [2Fe-2S]-[ferredoxin] + NADP(+) + H(+) = 2 oxidized [2Fe-2S]-[ferredoxin] + NADPH. The sequence is that of Ferredoxin--NADP reductase from Rhodospirillum rubrum (strain ATCC 11170 / ATH 1.1.1 / DSM 467 / LMG 4362 / NCIMB 8255 / S1).